The sequence spans 201 residues: ATP-dependent Clp protease proteolytic subunit (201 aa).

The active-site Nucleophile is the serine 98. Histidine 123 is an active-site residue.

The protein belongs to the peptidase S14 family. Fourteen ClpP subunits assemble into 2 heptameric rings which stack back to back to give a disk-like structure with a central cavity, resembling the structure of eukaryotic proteasomes.

The protein resides in the cytoplasm. It carries out the reaction Hydrolysis of proteins to small peptides in the presence of ATP and magnesium. alpha-casein is the usual test substrate. In the absence of ATP, only oligopeptides shorter than five residues are hydrolyzed (such as succinyl-Leu-Tyr-|-NHMec, and Leu-Tyr-Leu-|-Tyr-Trp, in which cleavage of the -Tyr-|-Leu- and -Tyr-|-Trp bonds also occurs).. Its function is as follows. Cleaves peptides in various proteins in a process that requires ATP hydrolysis. Has a chymotrypsin-like activity. Plays a major role in the degradation of misfolded proteins. This Rickettsia conorii (strain ATCC VR-613 / Malish 7) protein is ATP-dependent Clp protease proteolytic subunit.